The chain runs to 509 residues: MKYWQAILFFLFGIAFANNLNIPWKACPNYKTYSGRRHYPATGPLRLPFQRPATSCRTFHSKSVEQTIEDVKEQLEDEDLARLFENCMPNTLDTTIRWHAADSHNPQTLVITGDIPAEWIRDSANQLLPYLPLAKSDSPLATLILGAIQTQAEMLIQFPYCNAFQPPKQSFLSGNDNGQSDRVTPAYDPAVVFECKYELDSLASFLKLSYTYWLYTKDQSIFTVKWLAAVERIIQVLEEQSSPSFDEKTGLPKDPVYTFLRNTDSGTETLGLAGRGFPLNANASLIRSAFRPSDDACVLQYFIPANAMMVVELSHLNQMLQASGHADIARTALVWANKIQKGIDQHGIVDHPKFGKVYAYEVDGYGSILFMDDANVPSLLSLPYLGFVERDDPVYVNTRKMILSSEGNPYYLKGKVISGIGGPHIGLRNVWPMSLIVQALTSDDDDEIMSLLDVLKHSTAGLGLMHESVDVSSFKSFTRPWFSWANSLFAELILDLLERKPHLLKKNAS.

Helical transmembrane passes span 4-24, 140-160, 296-316, 368-388, and 417-437; these read WQAI…NIPW, LATL…QFPY, ACVL…LSHL, ILFM…LGFV, and ISGI…SLIV.

Its subcellular location is the endoplasmic reticulum membrane. Functionally, has a role in meiosis. The chain is Meiotically up-regulated gene 157 protein (mug157) from Schizosaccharomyces pombe (strain 972 / ATCC 24843) (Fission yeast).